The sequence spans 610 residues: Preterminal protein (610 aa).

Positions T288–S379 are disordered. A Nuclear localization signal motif is present at residues S328–R337. Positions I331 to R340 are enriched in basic residues. The span at R341 to R350 shows a compositional bias: basic and acidic residues. Residue S549 is modified to O-(5'-phospho-DNA)-serine.

It belongs to the adenoviridae terminal protein family. Heterodimer with the polymerase; this heterodimer binds to bp 9 to 18 of the genome. Interacts with host POU2F1; POU2F1 binds to the auxiliary sequences in the inverted terminal repeats and tethers the pTP-POL heterodimer to the origin DNA thereby participating in the assembly of the pre-initiation complex (POL-TP-DBP-NFIA-POU2F1). Preterminal protein is used to replicate viral genome, upon genomic encapsidation it is processed first into iTP and finally into TP by adenovirus protease.

The protein localises to the host nucleus matrix. Functionally, protein covalently bound to the viral DNA that acts as a primer for viral genomic replication by DNA strand displacement. Assembles on the viral origin of replication in an initiation complex with viral polymerase, DBP, host NFIA and host POU2F1/OCT1. During initiation, the polymerase covalently couples the first dCTP with Ser-580 of pTP. The terminal protein stimulates the template activity over 20 fold compared to protein-free templates. Neo-synthesized viral genomes are linked to two preterminal proteins, one for each 5' end. These new genomes are encapsidated in the nucleus, and during capsid maturation by viral protease, preterminal protein is first cleaved into intermediary (iTP), then into mature TP. May play a role in host nuclear matrix localization of genomic DNA. The sequence is that of Preterminal protein from Snake adenovirus serotype 1 (SnAdV-1).